The primary structure comprises 475 residues: MHFETVIGLEVHVELKTDSKMFSPSPAHFGAEPNSNTNVIDLAYPGVLPVVNRRAVDWAMRASMALNMEIATESKFDRKNYFYPDNPKAYQISQFDQPIGEHGYIDIEVDGETKRIGITRLHMEEDAGKSTHKDGYSLVDLNRQGTPLIEIVSEPDIRSPQEAYAYLEKLRSIIQYTGVSDCKMEEGSLRCDANISLRPYGQEEFGTKAELKNLNSFNYVRKGLEYEEKRQEEELLNGGEVLQETRRFDESTGKTILMRVKEGSDDYRYFPEPDIVPLYVDEAWKERVRQTIPELPDARKEKYVNEYGLPAYDAHVLTLTKEMSDFFEGAVEAGADVKLTSNWLMGGVNEYLNKNQVELQDTKLTPENLAGMIKLIEDGTMSSKIAKKVFPELAENGGDAKQIMEDKGLVQISDESVLLNFVNEALDNNPQSVEDFKNGKGRAKGFLVGQIMKASKGQANPQMVNKLLQQELDKR.

This sequence belongs to the GatB/GatE family. GatB subfamily. Heterotrimer of A, B and C subunits.

It carries out the reaction L-glutamyl-tRNA(Gln) + L-glutamine + ATP + H2O = L-glutaminyl-tRNA(Gln) + L-glutamate + ADP + phosphate + H(+). The catalysed reaction is L-aspartyl-tRNA(Asn) + L-glutamine + ATP + H2O = L-asparaginyl-tRNA(Asn) + L-glutamate + ADP + phosphate + 2 H(+). Allows the formation of correctly charged Asn-tRNA(Asn) or Gln-tRNA(Gln) through the transamidation of misacylated Asp-tRNA(Asn) or Glu-tRNA(Gln) in organisms which lack either or both of asparaginyl-tRNA or glutaminyl-tRNA synthetases. The reaction takes place in the presence of glutamine and ATP through an activated phospho-Asp-tRNA(Asn) or phospho-Glu-tRNA(Gln). This chain is Aspartyl/glutamyl-tRNA(Asn/Gln) amidotransferase subunit B, found in Staphylococcus carnosus (strain TM300).